A 349-amino-acid polypeptide reads, in one-letter code: Cobalt-precorrin-5B C(1)-methyltransferase (349 aa).

It belongs to the CbiD family.

The enzyme catalyses Co-precorrin-5B + S-adenosyl-L-methionine = Co-precorrin-6A + S-adenosyl-L-homocysteine. Its pathway is cofactor biosynthesis; adenosylcobalamin biosynthesis; cob(II)yrinate a,c-diamide from sirohydrochlorin (anaerobic route): step 6/10. Its function is as follows. Catalyzes the methylation of C-1 in cobalt-precorrin-5B to form cobalt-precorrin-6A. The chain is Cobalt-precorrin-5B C(1)-methyltransferase from Saccharolobus islandicus (strain L.S.2.15 / Lassen #1) (Sulfolobus islandicus).